Reading from the N-terminus, the 726-residue chain is Catalase-peroxidase (726 aa).

A cross-link (tryptophyl-tyrosyl-methioninium (Trp-Tyr) (with M-242)) is located at residues 93–216 (WHSAGTYRVH…LAAVQMGLIY (124 aa)). The active-site Proton acceptor is the His94. A cross-link (tryptophyl-tyrosyl-methioninium (Tyr-Met) (with W-93)) is located at residues 216-242 (YVNPEGPNGNPDPVAAAVDIRETFTRM). His257 is a heme b binding site. The tract at residues 471–490 (GSDKRGGANGARIRLSPQKD) is disordered.

The protein belongs to the peroxidase family. Peroxidase/catalase subfamily. As to quaternary structure, homodimer or homotetramer. It depends on heme b as a cofactor. Post-translationally, formation of the three residue Trp-Tyr-Met cross-link is important for the catalase, but not the peroxidase activity of the enzyme.

It carries out the reaction H2O2 + AH2 = A + 2 H2O. The catalysed reaction is 2 H2O2 = O2 + 2 H2O. Functionally, bifunctional enzyme with both catalase and broad-spectrum peroxidase activity. The chain is Catalase-peroxidase from Methylacidiphilum infernorum (isolate V4) (Methylokorus infernorum (strain V4)).